Here is a 305-residue protein sequence, read N- to C-terminus: GMP synthase [glutamine-hydrolyzing] subunit B (305 aa).

The 183-residue stretch at 2 to 184 (VNIEKFIDQA…LGLPAEIQHR (183 aa)) folds into the GMPS ATP-PPase domain. Position 29–35 (29–35 (SGGVDSS)) interacts with ATP.

In terms of assembly, heterodimer composed of a glutamine amidotransferase subunit (A) and a GMP-binding subunit (B).

The catalysed reaction is XMP + L-glutamine + ATP + H2O = GMP + L-glutamate + AMP + diphosphate + 2 H(+). Its pathway is purine metabolism; GMP biosynthesis; GMP from XMP (L-Gln route): step 1/1. Catalyzes the synthesis of GMP from XMP. The sequence is that of GMP synthase [glutamine-hydrolyzing] subunit B from Methanoculleus marisnigri (strain ATCC 35101 / DSM 1498 / JR1).